Here is a 210-residue protein sequence, read N- to C-terminus: Isochorismatase domain-containing protein 2 (210 aa).

Serine 7 bears the Phosphoserine mark.

Belongs to the isochorismatase family. Interacts with CDKN2A.

It is found in the cytoplasm. It localises to the nucleus. The sequence is that of Isochorismatase domain-containing protein 2 (Isoc2) from Rattus norvegicus (Rat).